The sequence spans 161 residues: Phosphopantetheine adenylyltransferase (161 aa).

Ser-8 contributes to the substrate binding site. ATP-binding positions include 8 to 9 (SF) and His-16. Residues Lys-40, Leu-72, and Arg-86 each coordinate substrate. Residues 87–89 (GLR), Glu-97, and 122–128 (FSFVSSS) contribute to the ATP site.

It belongs to the bacterial CoaD family. In terms of assembly, homohexamer. Requires Mg(2+) as cofactor.

The protein resides in the cytoplasm. It carries out the reaction (R)-4'-phosphopantetheine + ATP + H(+) = 3'-dephospho-CoA + diphosphate. The protein operates within cofactor biosynthesis; coenzyme A biosynthesis; CoA from (R)-pantothenate: step 4/5. Reversibly transfers an adenylyl group from ATP to 4'-phosphopantetheine, yielding dephospho-CoA (dPCoA) and pyrophosphate. The polypeptide is Phosphopantetheine adenylyltransferase (Thermotoga neapolitana (strain ATCC 49049 / DSM 4359 / NBRC 107923 / NS-E)).